A 226-amino-acid polypeptide reads, in one-letter code: Protein transport protein sec20 (226 aa).

The Cytoplasmic portion of the chain corresponds to 1-189; sequence MADVLNALEE…IKSLKLSDRS (189 aa). Residues 53–75 are a coiled coil; that stretch reads LRYEKAVQEYIRLNRRYRNKIAS. Position 97 is a phosphoserine (Ser97). The chain crosses the membrane as a helical; Anchor for type IV membrane protein span at residues 190–210; the sequence is DYFLVVSGFGFFIFVVVYLLF. Over 211–226 the chain is Lumenal; it reads KRIVWPILSMFLWFLR.

The protein belongs to the SEC20 family. Component of a SNARE complex consisting of ufe1, sec20, sec22 and use1. Interacts with tip20 through its cytoplasmic domain.

The protein resides in the endoplasmic reticulum membrane. Functionally, SNARE required for targeting and fusion of Golgi-derived retrograde transport vesicles with the ER. The polypeptide is Protein transport protein sec20 (Schizosaccharomyces pombe (strain 972 / ATCC 24843) (Fission yeast)).